The following is a 205-amino-acid chain: Imidazole glycerol phosphate synthase subunit HisH (205 aa).

Positions 6–205 constitute a Glutamine amidotransferase type-1 domain; that stretch reads RVGIIDHGSG…LLTRWLNQLS (200 aa). Cys84 acts as the Nucleophile in catalysis. Residues His185 and Glu187 contribute to the active site.

As to quaternary structure, heterodimer of HisH and HisF.

It is found in the cytoplasm. The catalysed reaction is 5-[(5-phospho-1-deoxy-D-ribulos-1-ylimino)methylamino]-1-(5-phospho-beta-D-ribosyl)imidazole-4-carboxamide + L-glutamine = D-erythro-1-(imidazol-4-yl)glycerol 3-phosphate + 5-amino-1-(5-phospho-beta-D-ribosyl)imidazole-4-carboxamide + L-glutamate + H(+). The enzyme catalyses L-glutamine + H2O = L-glutamate + NH4(+). It participates in amino-acid biosynthesis; L-histidine biosynthesis; L-histidine from 5-phospho-alpha-D-ribose 1-diphosphate: step 5/9. Functionally, IGPS catalyzes the conversion of PRFAR and glutamine to IGP, AICAR and glutamate. The HisH subunit catalyzes the hydrolysis of glutamine to glutamate and ammonia as part of the synthesis of IGP and AICAR. The resulting ammonia molecule is channeled to the active site of HisF. In Cutibacterium acnes (strain DSM 16379 / KPA171202) (Propionibacterium acnes), this protein is Imidazole glycerol phosphate synthase subunit HisH.